The sequence spans 308 residues: FGSLLGICLMTQIITGLLMAMHYTADTTLAFTSVAHTCRNVQFGWLIRNLHANGASMFFICIYLHIGRGFYYGSYLFKETWNTGVILLLTLMATAFVGYVLPWGQMSFWGATVITNLFSAIPYIGQTLVEWAWGGFSVDNPMLTRFFALHFLLPFMIAGLTFIHLTFLHETGSNNPLGISSNCDKIPFHPYFSTKDILGFLAMLVPLTALAMFSPNLLGDPENFTPANPLVTPPHIKPEWYFLFAYAILRSIPNKLGGVLALAASVLILFLIPFLHKSKQRTMTFRPLSQLLFWILVTNLLILTWVGS.

4 helical membrane passes run Phe-1 to Met-21, Trp-45 to Ile-66, Trp-81 to Leu-101, and Phe-146 to Thr-166. His-51 and His-65 together coordinate heme b. Residues His-150 and His-164 each coordinate heme b. His-169 contributes to the a ubiquinone binding site. Transmembrane regions (helical) follow at residues Thr-194 to Ser-214, Leu-256 to His-276, and Leu-288 to Ser-308.

This sequence belongs to the cytochrome b family. In terms of assembly, the cytochrome bc1 complex contains 11 subunits: 3 respiratory subunits (MT-CYB, CYC1 and UQCRFS1), 2 core proteins (UQCRC1 and UQCRC2) and 6 low-molecular weight proteins (UQCRH/QCR6, UQCRB/QCR7, UQCRQ/QCR8, UQCR10/QCR9, UQCR11/QCR10 and a cleavage product of UQCRFS1). This cytochrome bc1 complex then forms a dimer. Heme b serves as cofactor.

It is found in the mitochondrion inner membrane. Its function is as follows. Component of the ubiquinol-cytochrome c reductase complex (complex III or cytochrome b-c1 complex) that is part of the mitochondrial respiratory chain. The b-c1 complex mediates electron transfer from ubiquinol to cytochrome c. Contributes to the generation of a proton gradient across the mitochondrial membrane that is then used for ATP synthesis. The protein is Cytochrome b (MT-CYB) of Asthenes dorbignyi (Creamy-breasted canastero).